Here is a 1339-residue protein sequence, read N- to C-terminus: Receptor tyrosine-protein kinase erbB-3 (1339 aa).

The signal sequence occupies residues 1–19 (MRATGTLQVLCFLLSLARG). The Extracellular portion of the chain corresponds to 20 to 643 (SEMGNSQAVC…EVLMSKPHLV (624 aa)). A glycan (N-linked (GlcNAc...) asparagine) is linked at Asn126. Cystine bridges form between Cys186-Cys194, Cys190-Cys202, Cys210-Cys218, Cys214-Cys226, Cys227-Cys235, Cys231-Cys243, Cys246-Cys255, Cys259-Cys286, Cys290-Cys301, Cys305-Cys320, and Cys323-Cys327. Asn250 carries N-linked (GlcNAc...) asparagine glycosylation. N-linked (GlcNAc...) asparagine glycans are attached at residues Asn353, Asn408, Asn414, Asn437, and Asn469. 10 cysteine pairs are disulfide-bonded: Cys500–Cys509, Cys504–Cys517, Cys520–Cys529, Cys533–Cys549, Cys552–Cys565, Cys556–Cys573, Cys576–Cys585, Cys589–Cys610, Cys613–Cys621, and Cys617–Cys629. A glycan (N-linked (GlcNAc...) asparagine) is linked at Asn522. N-linked (GlcNAc...) asparagine glycosylation is present at Asn566. Asn616 carries N-linked (GlcNAc...) asparagine glycosylation. The chain crosses the membrane as a helical span at residues 644-662 (IAVTVGLAVILMILGGSFL). Over 663–1339 (YWRGRRIQNK…LFPKANAQRT (677 aa)) the chain is Cytoplasmic. The residue at position 684 (Ser684) is a Phosphoserine. The Protein kinase domain maps to 707 to 964 (LRKLKVLGSG…TFKELANEFT (258 aa)). ATP is bound by residues 713 to 721 (LGSGVFGTV), Lys740, 786 to 788 (QYL), and 832 to 837 (DLALRN). Residue Asp832 is the Proton acceptor of the active site. The residue at position 980 (Ser980) is a Phosphoserine. The span at 1023–1036 (SLGSALSLPTGTLT) shows a compositional bias: low complexity. Disordered regions lie at residues 1023-1052 (SLGSALSLPTGTLTRPRGSQSLLSPSSGYM) and 1078-1215 (PISL…GSLE). Residues 1039-1052 (RGSQSLLSPSSGYM) show a composition bias toward polar residues. Over residues 1172 to 1184 (GTLSSVGLSSVLG) the composition is skewed to low complexity. The segment covering 1185 to 1195 (TEEEDEDEEYE) has biased composition (acidic residues).

It belongs to the protein kinase superfamily. Tyr protein kinase family. EGF receptor subfamily. In terms of assembly, monomer and homodimer. Heterodimer with each of the other ERBB receptors (Potential). Interacts with CSPG5, PA2G4, GRB7, MYOC and MUC1. Found in a ternary complex with NRG1 and ITGAV:ITGB3 or ITGA6:ITGB4. Post-translationally, autophosphorylated. Ligand-binding increases phosphorylation on tyrosine residues and promotes its association with the p85 subunit of phosphatidylinositol 3-kinase.

The protein localises to the membrane. It catalyses the reaction L-tyrosyl-[protein] + ATP = O-phospho-L-tyrosyl-[protein] + ADP + H(+). Tyrosine-protein kinase that plays an essential role as cell surface receptor for neuregulins. Binds to neuregulin-1 (NRG1) and is activated by it; ligand-binding increases phosphorylation on tyrosine residues and promotes its association with the p85 subunit of phosphatidylinositol 3-kinase. May also be activated by CSPG5. Involved in the regulation of myeloid cell differentiation. This Rattus norvegicus (Rat) protein is Receptor tyrosine-protein kinase erbB-3 (Erbb3).